A 264-amino-acid chain; its full sequence is Thymidylate synthase (264 aa).

Arginine 21 is a dUMP binding site. A (6R)-5,10-methylene-5,6,7,8-tetrahydrofolate-binding site is contributed by histidine 51. 126 to 127 (RR) provides a ligand contact to dUMP. The active-site Nucleophile is cysteine 146. Residues 166-169 (RSAD), asparagine 177, and 207-209 (HIY) contribute to the dUMP site. Residue aspartate 169 coordinates (6R)-5,10-methylene-5,6,7,8-tetrahydrofolate. Serine 263 lines the (6R)-5,10-methylene-5,6,7,8-tetrahydrofolate pocket.

Belongs to the thymidylate synthase family. Bacterial-type ThyA subfamily. As to quaternary structure, homodimer.

The protein resides in the cytoplasm. It catalyses the reaction dUMP + (6R)-5,10-methylene-5,6,7,8-tetrahydrofolate = 7,8-dihydrofolate + dTMP. It participates in pyrimidine metabolism; dTTP biosynthesis. Its function is as follows. Catalyzes the reductive methylation of 2'-deoxyuridine-5'-monophosphate (dUMP) to 2'-deoxythymidine-5'-monophosphate (dTMP) while utilizing 5,10-methylenetetrahydrofolate (mTHF) as the methyl donor and reductant in the reaction, yielding dihydrofolate (DHF) as a by-product. This enzymatic reaction provides an intracellular de novo source of dTMP, an essential precursor for DNA biosynthesis. In Exiguobacterium sp. (strain ATCC BAA-1283 / AT1b), this protein is Thymidylate synthase.